The primary structure comprises 1193 residues: Kinesin-related protein 3 (1193 aa).

The region spanning 3-329 (SIRVVCRFRP…LRFGSRAKNI (327 aa)) is the Kinesin motor domain. An ATP-binding site is contributed by 85 to 92 (GQTGSGKT). Disordered regions lie at residues 377–429 (KSSG…SSNV), 573–600 (SSIA…KHAD), 611–630 (LLQR…TATS), 638–665 (ISES…ATSS), 973–1016 (GGGG…SANL), 1032–1114 (KAEP…PVKI), and 1127–1193 (FKKK…QQKD). Low complexity predominate over residues 405 to 429 (SSNLSNSVNSTSNLNTSSNTSSSNV). A coiled-coil region spans residues 450-962 (ELIKVLQEKC…SQVGVDAQNT (513 aa)). Polar residues-rich tracts occupy residues 573-585 (SSIA…TPKS) and 614-630 (RTPS…TATS). Composition is skewed to low complexity over residues 643-665 (NIGS…ATSS) and 985-1006 (HSSS…NNNH). Over residues 1007–1016 (TTPTPLSANL) the composition is skewed to polar residues. Low complexity-rich tracts occupy residues 1044–1078 (NTSI…IGNS), 1086–1109 (NNNS…LNGN), and 1132–1149 (PSST…QSPQ). Polar residues-rich tracts occupy residues 1150-1165 (TPSH…ISPN) and 1174-1193 (FSYT…QQKD).

Belongs to the TRAFAC class myosin-kinesin ATPase superfamily. Kinesin family. Kinesin subfamily. In terms of assembly, dimer.

The protein localises to the cytoplasm. Its subcellular location is the cytoskeleton. Its function is as follows. Microtubule-associated force-producing protein that plays a role in organelle transport. Its motor activity is directed toward the microtubule's plus end. The maximal velocity in an inverted motility assay (moving microtubules on fixed motors) was 1.96 um/s. The protein is Kinesin-related protein 3 (kif3) of Dictyostelium discoideum (Social amoeba).